We begin with the raw amino-acid sequence, 478 residues long: Proton-coupled amino acid transporter 2 (478 aa).

Composition is skewed to polar residues over residues 1–14 (MSVT…QVAT) and 26–37 (KLQSQDPSPANG). Positions 1-46 (MSVTKSARSPQVATPLNLDLPESAKKLQSQDPSPANGSSSESSKKT) are disordered. At 1–53 (MSVTKSARSPQVATPLNLDLPESAKKLQSQDPSPANGSSSESSKKTKGITGFQ) the chain is on the cytoplasmic side. A helical transmembrane segment spans residues 54–74 (TLVHLVKGNMGTGILGLPLAV). The Extracellular segment spans residues 75–76 (KN). The chain crosses the membrane as a helical span at residues 77-97 (AGILMGPLSLLVMGLIACHCM). Over 98–143 (HILVRCAQRFCHRLNKPFMDYGDTVMHGLAFSPNAWLQNHAHWGRR) the chain is Cytoplasmic. The chain crosses the membrane as a helical span at residues 144-164 (VVSFFLIVTQLGFCCVYIVFL). The Extracellular segment spans residues 165–192 (ADNLKQVVEAVNSTTISCHKNETVVLTP). The helical transmembrane segment at 193 to 213 (TMDSRLYMLSFLPVLGLLVFV) threads the bilayer. At 214–217 (RNLR) the chain is on the cytoplasmic side. Residues 218-238 (VLTIFSLLANISMLVSLVIIA) traverse the membrane as a helical segment. The Extracellular portion of the chain corresponds to 239 to 259 (QYIIQEIPDASQLPLVASWKT). A helical membrane pass occupies residues 260–280 (YPLFFGTAIFSFESIGVVLPL). At 281-292 (ENKMKDARGFPT) the chain is on the cytoplasmic side. A helical transmembrane segment spans residues 293–313 (ILSLGMSIITTLYIAIGALGY). The Extracellular portion of the chain corresponds to 314–340 (LRFGDDIKASITLNLPNCWLYQSVKLL). The chain crosses the membrane as a helical span at residues 341–361 (YVVGILCTYALQFYVPAEIII). The Cytoplasmic portion of the chain corresponds to 362–374 (PLAVSQVSKRWAL). The chain crosses the membrane as a helical span at residues 375–395 (PVDLSIRLALVCLTCMLAILI). Residues 396-399 (PRLD) lie on the Extracellular side of the membrane. The chain crosses the membrane as a helical span at residues 400-420 (LVLSLVGSVSSSALALIIPPL). At 421-441 (LEVVTYYGEGISPLTVTKDAL) the chain is on the cytoplasmic side. A helical transmembrane segment spans residues 442–462 (ISILGFMGFVVGTYQALDELI). The Extracellular segment spans residues 463-478 (KSGNSPALSNSTMFIQ).

This sequence belongs to the amino acid/polyamine transporter 2 family. Expressed in spinal cord, brain, testis, lung, heart, colon, spleen, kidney and muscle. Found in neuronal cell bodies in the anterior horn, in spinal cord brain stem, cerebellum, hippocampus, hypothalamus, rhinencephalon, cerebral cortex, and olfactory bulb in the brain. Also expressed in bone and fat tissues.

It localises to the cell membrane. The protein resides in the endoplasmic reticulum membrane. It is found in the recycling endosome membrane. The catalysed reaction is glycine(in) + H(+)(in) = glycine(out) + H(+)(out). It carries out the reaction L-alanine(in) + H(+)(in) = L-alanine(out) + H(+)(out). The enzyme catalyses D-alanine(in) + H(+)(in) = D-alanine(out) + H(+)(out). It catalyses the reaction L-proline(out) + H(+)(out) = L-proline(in) + H(+)(in). The catalysed reaction is D-proline(out) + H(+)(out) = D-proline(in) + H(+)(in). It carries out the reaction 4-hydroxy-L-proline(in) + H(+)(in) = 4-hydroxy-L-proline(out) + H(+)(out). The enzyme catalyses L-serine(in) + H(+)(in) = L-serine(out) + H(+)(out). It catalyses the reaction D-serine(out) + H(+)(out) = D-serine(in) + H(+)(in). The catalysed reaction is beta-alanine(in) + H(+)(in) = beta-alanine(out) + H(+)(out). It carries out the reaction 4-aminobutanoate(in) + H(+)(in) = 4-aminobutanoate(out) + H(+)(out). The enzyme catalyses sarcosine(in) + H(+)(in) = sarcosine(out) + H(+)(out). It catalyses the reaction N,N-dimethylglycine(in) + H(+)(in) = N,N-dimethylglycine(out) + H(+)(out). In terms of biological role, electrogenic proton/amino acid symporter with a high selectivity for the small side chains amino acids glycine, alanine and proline, where both L- and D-enantiomers are transported. Extension of the backbone length, as in beta-alanine and 4-aminobutanoate or methylation of the amino group, as in sarcosine and N,N-dimethylglycine, are also tolerated but decrease transport efficiency. A free carboxyl group is preferred. In Mus musculus (Mouse), this protein is Proton-coupled amino acid transporter 2.